The sequence spans 307 residues: Heparan sulfate glucosamine 3-O-sulfotransferase 1 (307 aa).

Residues 1–20 (MAALLLGAVLLVAQPQLVPS) form the signal peptide. N-linked (GlcNAc...) asparagine glycosylation occurs at Asn48. Residues 64-68 (KGGTR), Arg147, and Ser155 contribute to the 3'-phosphoadenylyl sulfate site. 3 N-linked (GlcNAc...) asparagine glycosylation sites follow: Asn192, Asn242, and Asn249. Tyr255 provides a ligand contact to 3'-phosphoadenylyl sulfate. Cys256 and Cys265 are disulfide-bonded. Position 270–274 (270–274 (KGRAH)) interacts with 3'-phosphoadenylyl sulfate.

This sequence belongs to the sulfotransferase 1 family. As to expression, highly expressed in the brain and kidney and weakly expressed in the heart, lung and placenta.

It localises to the golgi apparatus lumen. It carries out the reaction alpha-D-glucosaminyl-[heparan sulfate](n) + 3'-phosphoadenylyl sulfate = 3-sulfo-alpha-D-glucosaminyl-[heparan sulfate](n) + adenosine 3',5'-bisphosphate + H(+). In terms of biological role, sulfotransferase that utilizes 3'-phospho-5'-adenylyl sulfate (PAPS) to catalyze the transfer of a sulfo group to position 3 of glucosamine residues in heparan. Catalyzes the rate limiting step in the biosynthesis of heparan sulfate (HSact). This modification is a crucial step in the biosynthesis of anticoagulant heparan sulfate as it completes the structure of the antithrombin pentasaccharide binding site. The protein is Heparan sulfate glucosamine 3-O-sulfotransferase 1 (HS3ST1) of Homo sapiens (Human).